Here is a 157-residue protein sequence, read N- to C-terminus: S-ribosylhomocysteine lyase (157 aa).

Residues histidine 54, histidine 58, and cysteine 124 each contribute to the Fe cation site.

Belongs to the LuxS family. As to quaternary structure, homodimer. Requires Fe cation as cofactor.

The enzyme catalyses S-(5-deoxy-D-ribos-5-yl)-L-homocysteine = (S)-4,5-dihydroxypentane-2,3-dione + L-homocysteine. Its function is as follows. Involved in the synthesis of autoinducer 2 (AI-2) which is secreted by bacteria and is used to communicate both the cell density and the metabolic potential of the environment. The regulation of gene expression in response to changes in cell density is called quorum sensing. Catalyzes the transformation of S-ribosylhomocysteine (RHC) to homocysteine (HC) and 4,5-dihydroxy-2,3-pentadione (DPD). In Lactobacillus acidophilus (strain ATCC 700396 / NCK56 / N2 / NCFM), this protein is S-ribosylhomocysteine lyase.